The sequence spans 64 residues: Large ribosomal subunit protein uL29 (64 aa).

Belongs to the universal ribosomal protein uL29 family.

This Psychrobacter sp. (strain PRwf-1) protein is Large ribosomal subunit protein uL29.